The chain runs to 1154 residues: DNA-directed RNA polymerase subunit beta (1154 aa).

Basic and acidic residues predominate over residues 1108 to 1123 (ELGIDIQGEDRSERAG). The tract at residues 1108–1136 (ELGIDIQGEDRSERAGEPASPDEMDDEEE) is disordered. Over residues 1127–1136 (SPDEMDDEEE) the composition is skewed to acidic residues.

This sequence belongs to the RNA polymerase beta chain family. In terms of assembly, the RNAP catalytic core consists of 2 alpha, 1 beta, 1 beta' and 1 omega subunit. When a sigma factor is associated with the core the holoenzyme is formed, which can initiate transcription.

The catalysed reaction is RNA(n) + a ribonucleoside 5'-triphosphate = RNA(n+1) + diphosphate. DNA-dependent RNA polymerase catalyzes the transcription of DNA into RNA using the four ribonucleoside triphosphates as substrates. This Heliobacterium modesticaldum (strain ATCC 51547 / Ice1) protein is DNA-directed RNA polymerase subunit beta.